Consider the following 426-residue polypeptide: Putative acid phosphatase 1 (426 aa).

The N-terminal stretch at 1–18 (MRVLFYVSILVIIASVHT) is a signal peptide. Over 19 to 388 (QLISVHVIFR…SEWVMTPLSW (370 aa)) the chain is Extracellular. H29 functions as the Nucleophile in the catalytic mechanism. Residues N37 and N145 are each glycosylated (N-linked (GlcNAc...) asparagine). A disulfide bond links C133 and C369. D276 (proton donor) is an active-site residue. The chain crosses the membrane as a helical span at residues 389–409 (IIVAIAILLLIALILMTYFVI). The Cytoplasmic portion of the chain corresponds to 410–426 (RYKNRSIVNIKKLSLEN).

Belongs to the histidine acid phosphatase family.

It localises to the membrane. The catalysed reaction is a phosphate monoester + H2O = an alcohol + phosphate. In Caenorhabditis elegans, this protein is Putative acid phosphatase 1.